The chain runs to 183 residues: Der GTPase-activating protein YihI (183 aa).

The span at 1 to 18 shows a compositional bias: low complexity; sequence MNQPSKAPRAPRSSAATP. A disordered region spans residues 1 to 114; sequence MNQPSKAPRA…EEELAKLEND (114 aa). Residues 25–34 are compositionally biased toward basic and acidic residues; the sequence is RAELDQEARE. Residues 56–65 show a composition bias toward low complexity; sequence NQKNKAAAQA. Positions 92–114 are enriched in basic and acidic residues; that stretch reads PKAEAKPKPRLTPEEELAKLEND.

It belongs to the YihI family. In terms of assembly, interacts with Der.

A GTPase-activating protein (GAP) that modifies Der/EngA GTPase function. May play a role in ribosome biogenesis. The sequence is that of Der GTPase-activating protein YihI from Serratia proteamaculans (strain 568).